A 210-amino-acid polypeptide reads, in one-letter code: Interleukin-6 (210 aa).

Residues 1–25 (MNSLSTSAFSPVAFSLGLLLVMATA) form the signal peptide. The cysteines at positions 72 and 78 are disulfide-linked. The residue at position 81 (Ser-81) is a Phosphoserine. The cysteines at positions 101 and 111 are disulfide-linked.

Belongs to the IL-6 superfamily. In terms of assembly, component of a hexamer of two molecules each of IL6, IL6R and IL6ST; first binds to IL6R to associate with the signaling subunit IL6ST. Interacts with IL6R (via the N-terminal ectodomain); this interaction may be affected by IL6R-binding with SORL1, hence decreasing IL6 cis signaling. Interacts with SORL1 (via the N-terminal ectodomain); this interaction leads to IL6 internalization and lysosomal degradation. May form a trimeric complex with the soluble SORL1 ectodomain and soluble IL6R receptor; this interaction might stabilize circulating IL6, hence promoting IL6 trans signaling.

It is found in the secreted. In terms of biological role, cytokine with a wide variety of biological functions in immunity, tissue regeneration, and metabolism. Binds to IL6R, then the complex associates to the signaling subunit IL6ST/gp130 to trigger the intracellular IL6-signaling pathway. The interaction with the membrane-bound IL6R and IL6ST stimulates 'classic signaling', whereas the binding of IL6 and soluble IL6R to IL6ST stimulates 'trans-signaling'. Alternatively, 'cluster signaling' occurs when membrane-bound IL6:IL6R complexes on transmitter cells activate IL6ST receptors on neighboring receiver cells. Functionally, IL6 is a potent inducer of the acute phase response. Rapid production of IL6 contributes to host defense during infection and tissue injury, but excessive IL6 synthesis is involved in disease pathology. In the innate immune response, is synthesized by myeloid cells, such as macrophages and dendritic cells, upon recognition of pathogens through toll-like receptors (TLRs) at the site of infection or tissue injury. In the adaptive immune response, is required for the differentiation of B cells into immunoglobulin-secreting cells. Plays a major role in the differentiation of CD4(+) T cell subsets. Essential factor for the development of T follicular helper (Tfh) cells that are required for the induction of germinal-center formation. Required to drive naive CD4(+) T cells to the Th17 lineage. Also required for proliferation of myeloma cells and the survival of plasmablast cells. Acts as an essential factor in bone homeostasis and on vessels directly or indirectly by induction of VEGF, resulting in increased angiogenesis activity and vascular permeability. Induces, through 'trans-signaling' and synergistically with IL1B and TNF, the production of VEGF. Involved in metabolic controls, is discharged into the bloodstream after muscle contraction increasing lipolysis and improving insulin resistance. 'Trans-signaling' in central nervous system also regulates energy and glucose homeostasis. Mediates, through GLP-1, crosstalk between insulin-sensitive tissues, intestinal L cells and pancreatic islets to adapt to changes in insulin demand. Also acts as a myokine. Plays a protective role during liver injury, being required for maintenance of tissue regeneration. Also has a pivotal role in iron metabolism by regulating HAMP/hepcidin expression upon inflammation or bacterial infection. Through activation of IL6ST-YAP-NOTCH pathway, induces inflammation-induced epithelial regeneration. In Mustela putorius furo (European domestic ferret), this protein is Interleukin-6 (IL6).